Here is a 333-residue protein sequence, read N- to C-terminus: Putative fimbrium anchoring subunit Fim4B (333 aa).

A signal peptide spans 1–20 (MRNTRYGFLVLLSSLLMLTG). C21 is lipidated: N-palmitoyl cysteine. Residue C21 is the site of S-diacylglycerol cysteine attachment. The disordered stretch occupies residues 274–333 (ENAGTGEDGKPTPPPEIELPPDDKIEVDKPETPPNPDGGGGMGGNVDGWGPEDNVELPVN). The span at 294-304 (PDDKIEVDKPE) shows a compositional bias: basic and acidic residues. The span at 310–320 (DGGGGMGGNVD) shows a compositional bias: gly residues.

It belongs to the bacteroidetes fimbrillin superfamily. FimB/Mfa2 family.

Its subcellular location is the cell outer membrane. In terms of biological role, putative fimbrium anchoring subunit. The sequence is that of Putative fimbrium anchoring subunit Fim4B from Bacteroides ovatus (strain ATCC 8483 / DSM 1896 / JCM 5824 / BCRC 10623 / CCUG 4943 / NCTC 11153).